The following is a 100-amino-acid chain: Aspartyl/glutamyl-tRNA(Asn/Gln) amidotransferase subunit C (100 aa).

It belongs to the GatC family. As to quaternary structure, heterotrimer of A, B and C subunits.

The enzyme catalyses L-glutamyl-tRNA(Gln) + L-glutamine + ATP + H2O = L-glutaminyl-tRNA(Gln) + L-glutamate + ADP + phosphate + H(+). It catalyses the reaction L-aspartyl-tRNA(Asn) + L-glutamine + ATP + H2O = L-asparaginyl-tRNA(Asn) + L-glutamate + ADP + phosphate + 2 H(+). Allows the formation of correctly charged Asn-tRNA(Asn) or Gln-tRNA(Gln) through the transamidation of misacylated Asp-tRNA(Asn) or Glu-tRNA(Gln) in organisms which lack either or both of asparaginyl-tRNA or glutaminyl-tRNA synthetases. The reaction takes place in the presence of glutamine and ATP through an activated phospho-Asp-tRNA(Asn) or phospho-Glu-tRNA(Gln). The sequence is that of Aspartyl/glutamyl-tRNA(Asn/Gln) amidotransferase subunit C from Staphylococcus aureus (strain Newman).